The following is a 195-amino-acid chain: Pyruvoyl-dependent arginine decarboxylase AaxB (195 aa).

Ser-53 carries the pyruvic acid (Ser) modification.

It belongs to the pyruvoyl-dependent arginine decarboxylase family. Trimer of an alpha-beta dimer. The cofactor is pyruvate.

The protein localises to the cytoplasm. It carries out the reaction L-arginine + H(+) = agmatine + CO2. In terms of biological role, part of the AaxABC system, catalyzes the decarboxylation of L-arginine. The arginine uptake by the bacterium in the macrophage may be a virulence factor against the host innate immune response. The protein is Pyruvoyl-dependent arginine decarboxylase AaxB (aaxB) of Chlamydia trachomatis serovar D (strain ATCC VR-885 / DSM 19411 / UW-3/Cx).